The primary structure comprises 574 residues: DNA polymerase alpha subunit B (574 aa).

This sequence belongs to the DNA polymerase alpha subunit B family. As to quaternary structure, component of the alpha DNA polymerase complex (also known as the alpha DNA polymerase-primase complex) consisting of four subunits: the catalytic subunit pol1, the accessory subunit spb70/pol12, and the primase complex subunits spp1/pri1 and spp2/pri2 respectively. Interacts with orc1. Interacts with orc2; the interaction occurs on the chromatin, is stable thoughout the cell cycle and is independent from spb70 role in the alpha DNA polymerase complex. In terms of processing, phosphorylated in a cell cycle-dependent manner.

The protein localises to the nucleus. The protein resides in the chromosome. In terms of biological role, accessory subunit of the DNA polymerase alpha complex (also known as the alpha DNA polymerase-primase complex) which plays an essential role in the initiation of DNA synthesis. During the S phase of the cell cycle, the DNA polymerase alpha complex (composed of a catalytic subunit pol1, an accessory subunit spb70/pol12 and two primase subunits, the catalytic subunit spp1/pri1 and the regulatory subunit spp2/pri2) is recruited to DNA at the replicative forks. The primase subunit of the polymerase alpha complex initiates DNA synthesis by oligomerising short RNA primers on both leading and lagging strands. This is DNA polymerase alpha subunit B from Schizosaccharomyces pombe (strain 972 / ATCC 24843) (Fission yeast).